We begin with the raw amino-acid sequence, 456 residues long: uncharacterized protein (456 aa).

Residues 415-428 (SNSNGSSSSGNSSS) show a composition bias toward low complexity. The segment at 415-444 (SNSNGSSSSGNSSSIYNSHLMNDKKKNNNA) is disordered.

This is an uncharacterized protein from Saccharomyces cerevisiae (strain ATCC 204508 / S288c) (Baker's yeast).